We begin with the raw amino-acid sequence, 525 residues long: Retinoblastoma-binding-like protein E (525 aa).

5 WD repeats span residues 25 to 66 (PKNI…IVRT), 69 to 108 (HHTGCVNSISWSRNGKKLLTASNDGSLVLWDLATSKILYS), 222 to 261 (SSNTTVKQIEFSRNHRFMLVSSSDKVLRLISLESTNLYQQ), 267 to 312 (DSVN…KDLE), and 313 to 352 (GPKEGLVDVVWHPLRPIIVSISFTGVIYVWTAYFEENWSS). Disordered stretches follow at residues 371-398 (DEFDAKDSDNENQEVNNNNNNNIGRNPY) and 462-525 (EKYQ…KKRK). Over residues 383–392 (QEVNNNNNNN) the composition is skewed to low complexity. The span at 462 to 471 (EKYQKDKEDS) shows a compositional bias: basic and acidic residues. Residues 472 to 500 (SSTTSNSTISSSSSPSPSSSSTTTTTTTS) show a composition bias toward low complexity. A compositionally biased stretch (basic and acidic residues) spans 501–525 (QKKDETQKKEKSTKKERNSDSKKRK).

It is found in the nucleus. Involved in mono-, di- and trimethylation at 'Lys-4' of histone H3. Histone H3 'Lys-4' methylation represents a specific tag for epigenetic transcriptional activation. This Dictyostelium discoideum (Social amoeba) protein is Retinoblastoma-binding-like protein E.